The primary structure comprises 111 residues: Probable 4-amino-4-deoxy-L-arabinose-phosphoundecaprenol flippase subunit ArnE (111 aa).

The next 3 helical transmembrane spans lie at Leu-38–Leu-58, Leu-61–Ala-81, and Val-89–Ser-109. The region spanning Leu-40–Ser-109 is the EamA domain.

The protein belongs to the ArnE family. In terms of assembly, heterodimer of ArnE and ArnF.

Its subcellular location is the cell inner membrane. It functions in the pathway bacterial outer membrane biogenesis; lipopolysaccharide biosynthesis. Functionally, translocates 4-amino-4-deoxy-L-arabinose-phosphoundecaprenol (alpha-L-Ara4N-phosphoundecaprenol) from the cytoplasmic to the periplasmic side of the inner membrane. This is Probable 4-amino-4-deoxy-L-arabinose-phosphoundecaprenol flippase subunit ArnE from Salmonella paratyphi A (strain ATCC 9150 / SARB42).